The sequence spans 195 residues: Phosphoheptose isomerase (195 aa).

In terms of domain architecture, SIS spans 36-195 (LVDSLKGDGI…IIEKELFGLD (160 aa)). 51-53 (NGG) contacts substrate. Zn(2+) is bound by residues His-60 and Glu-64. Residues Glu-64, 95 to 96 (ND), 121 to 123 (TTS), Ser-126, and Gln-173 each bind substrate. 2 residues coordinate Zn(2+): Gln-173 and His-181.

This sequence belongs to the SIS family. GmhA subfamily. Zn(2+) serves as cofactor.

It localises to the cytoplasm. The enzyme catalyses 2 D-sedoheptulose 7-phosphate = D-glycero-alpha-D-manno-heptose 7-phosphate + D-glycero-beta-D-manno-heptose 7-phosphate. It functions in the pathway carbohydrate biosynthesis; D-glycero-D-manno-heptose 7-phosphate biosynthesis; D-glycero-alpha-D-manno-heptose 7-phosphate and D-glycero-beta-D-manno-heptose 7-phosphate from sedoheptulose 7-phosphate: step 1/1. Catalyzes the isomerization of sedoheptulose 7-phosphate in D-glycero-D-manno-heptose 7-phosphate. In Leptospira biflexa serovar Patoc (strain Patoc 1 / Ames), this protein is Phosphoheptose isomerase.